Consider the following 275-residue polypeptide: Peflin (275 aa).

8 tandem repeats follow at residues 21–29 (PPGGYYPGP), 31–39 (HGGGQYGSG), 41–49 (PPGGGYGAP), 50–59 (APGGPYGYPS), 60–68 (AGGVPSGTP), 76–84 (PPGGPYGQL), 85–91 (PPGGPYG), and 92–100 (TQPGHYGQG). Disordered stretches follow at residues 21-45 (PPGG…PGGG) and 59-103 (SAGG…GGVP). Positions 21–100 (PPGGYYPGPP…GTQPGHYGQG (80 aa)) are 8 X 9 AA approximate tandem repeat of [AP]-P-G-G-P-Y-G-G-P-P. The segment covering 31-45 (HGGGQYGSGLPPGGG) has biased composition (gly residues). Positions 59–70 (SAGGVPSGTPSG) are enriched in low complexity. 5 EF-hand domains span residues 105–140 (NVDP…SNWS), 146–174 (TCLM…WKFL), 172–207 (KFLQ…MGYN), 208–244 (LSPQ…LQVL), and 245–274 (TEAF…ASRM). Positions 118, 120, 122, 124, and 129 each coordinate Ca(2+). Residues aspartate 185, aspartate 187, serine 189, serine 191, and glutamate 196 each coordinate Ca(2+). The required for interaction with PDCD6 stretch occupies residues 195 to 275 (TELQQALSQM…FVTMTASRML (81 aa)).

Heterodimer; heterodimerizes (via the EF-hand 5) with PDCD6. Dissociates from PDCD6 in presence of calcium. Ubiquitinated by the BCR(KLHL12) E3 ubiquitin ligase complex.

It localises to the cytoplasm. It is found in the endoplasmic reticulum. Its subcellular location is the membrane. The protein resides in the cytoplasmic vesicle. The protein localises to the COPII-coated vesicle membrane. Calcium-binding protein that acts as an adapter that bridges unrelated proteins or stabilizes weak protein-protein complexes in response to calcium. Together with PDCD6, acts as a calcium-dependent adapter for the BCR(KLHL12) complex, a complex involved in endoplasmic reticulum (ER)-Golgi transport by regulating the size of COPII coats. In response to cytosolic calcium increase, the heterodimer formed with PDCD6 interacts with, and bridges together the BCR(KLHL12) complex and SEC31 (SEC31A or SEC31B), promoting monoubiquitination of SEC31 and subsequent collagen export, which is required for neural crest specification. Its role in the heterodimer formed with PDCD6 is however unclear: some evidence shows that PEF1 and PDCD6 work together and promote association between PDCD6 and SEC31 in presence of calcium. Other reports show that PEF1 dissociates from PDCD6 in presence of calcium, and may act as a negative regulator of PDCD6. Also acts as a negative regulator of ER-Golgi transport; possibly by inhibiting interaction between PDCD6 and SEC31. In Mus musculus (Mouse), this protein is Peflin.